Reading from the N-terminus, the 102-residue chain is RNA-binding protein Hfq (102 aa).

Positions 9–68 (DPFLNALRRERVPVSIYLVNGIKLQGQIESFDQFVILLKNTVSQMVYKHAISTVVPSRPV) constitute a Sm domain. A disordered region spans residues 63–102 (VPSRPVSHHSNNAGGGSNNYHHSNNAQPSSAASQDSEDAE). A compositionally biased stretch (low complexity) spans 70–96 (HHSNNAGGGSNNYHHSNNAQPSSAASQ).

It belongs to the Hfq family. In terms of assembly, homohexamer.

In terms of biological role, RNA chaperone that binds small regulatory RNA (sRNAs) and mRNAs to facilitate mRNA translational regulation in response to envelope stress, environmental stress and changes in metabolite concentrations. Also binds with high specificity to tRNAs. This is RNA-binding protein Hfq from Cronobacter sakazakii (strain ATCC BAA-894) (Enterobacter sakazakii).